Reading from the N-terminus, the 411-residue chain is Protein phosphatase 1 regulatory subunit 36 (411 aa).

Interacts with PPP1CA.

Inhibits phosphatase activity of protein phosphatase 1 (PP1) complexes. The sequence is that of Protein phosphatase 1 regulatory subunit 36 (Ppp1r36) from Rattus norvegicus (Rat).